A 273-amino-acid polypeptide reads, in one-letter code: 4-hydroxy-tetrahydrodipicolinate reductase (273 aa).

NAD(+) contacts are provided by residues 12–17 (GAGGRM) and glutamate 38. Position 39 (arginine 39) interacts with NADP(+). Residues 102-104 (GTT) and 126-129 (AANF) each bind NAD(+). Residue histidine 159 is the Proton donor/acceptor of the active site. Histidine 160 is a binding site for (S)-2,3,4,5-tetrahydrodipicolinate. Lysine 163 serves as the catalytic Proton donor. 169-170 (GT) provides a ligand contact to (S)-2,3,4,5-tetrahydrodipicolinate.

It belongs to the DapB family. In terms of assembly, homotetramer.

It is found in the cytoplasm. It carries out the reaction (S)-2,3,4,5-tetrahydrodipicolinate + NAD(+) + H2O = (2S,4S)-4-hydroxy-2,3,4,5-tetrahydrodipicolinate + NADH + H(+). The catalysed reaction is (S)-2,3,4,5-tetrahydrodipicolinate + NADP(+) + H2O = (2S,4S)-4-hydroxy-2,3,4,5-tetrahydrodipicolinate + NADPH + H(+). It participates in amino-acid biosynthesis; L-lysine biosynthesis via DAP pathway; (S)-tetrahydrodipicolinate from L-aspartate: step 4/4. Catalyzes the conversion of 4-hydroxy-tetrahydrodipicolinate (HTPA) to tetrahydrodipicolinate. This chain is 4-hydroxy-tetrahydrodipicolinate reductase, found in Shigella boydii serotype 4 (strain Sb227).